Here is a 143-residue protein sequence, read N- to C-terminus: Hemoglobin subunit alpha-2 (143 aa).

The residue at position 2 (Ser-2) is an N-acetylserine. The 142-residue stretch at 2 to 143 (SLTEKDKAAV…LSLALAEKYR (142 aa)) folds into the Globin domain. His-60 is a binding site for O2. His-89 contacts heme b.

This sequence belongs to the globin family. As to quaternary structure, hb2 is a heterotetramer of two alpha-2 chains and two beta-1 chains; Hb3 is a heterotetramer of two alpha-2 chains and two beta-2 chains. Red blood cells.

Its function is as follows. Involved in oxygen transport from gills to the various peripheral tissues. The sequence is that of Hemoglobin subunit alpha-2 (hba2) from Anarhichas minor (Arctic spotted wolffish).